Reading from the N-terminus, the 416-residue chain is Gamma-glutamyl phosphate reductase (416 aa).

This sequence belongs to the gamma-glutamyl phosphate reductase family.

The protein localises to the cytoplasm. It catalyses the reaction L-glutamate 5-semialdehyde + phosphate + NADP(+) = L-glutamyl 5-phosphate + NADPH + H(+). It participates in amino-acid biosynthesis; L-proline biosynthesis; L-glutamate 5-semialdehyde from L-glutamate: step 2/2. Functionally, catalyzes the NADPH-dependent reduction of L-glutamate 5-phosphate into L-glutamate 5-semialdehyde and phosphate. The product spontaneously undergoes cyclization to form 1-pyrroline-5-carboxylate. This chain is Gamma-glutamyl phosphate reductase, found in Streptococcus pyogenes serotype M6 (strain ATCC BAA-946 / MGAS10394).